Here is a 196-residue protein sequence, read N- to C-terminus: Type-4 uracil-DNA glycosylase (196 aa).

Positions 13 and 16 each coordinate [4Fe-4S] cluster. Residues 40-42 (GEA), F54, and N80 each bind uracil. [4Fe-4S] cluster contacts are provided by C84 and C100. Uracil is bound at residue H162.

Belongs to the uracil-DNA glycosylase (UDG) superfamily. Type 4 (UDGa) family.

The catalysed reaction is Hydrolyzes single-stranded DNA or mismatched double-stranded DNA and polynucleotides, releasing free uracil.. In terms of biological role, removes uracil bases that are present in DNA as a result of either deamination of cytosine or misincorporation of dUMP instead of dTMP. Can remove uracil from double-stranded DNA containing either a U/G or U/A base pair as well as from single-stranded DNA. This chain is Type-4 uracil-DNA glycosylase, found in Pyrobaculum aerophilum (strain ATCC 51768 / DSM 7523 / JCM 9630 / CIP 104966 / NBRC 100827 / IM2).